A 154-amino-acid chain; its full sequence is Transcriptional repressor NrdR (154 aa).

A zinc finger lies at 3-34 (CPFCGANDTKVIDSRLVAEGEQVRRRRECVAC). The 91-residue stretch at 49-139 (PRLIKQDGTR…VYRRFQDLDE (91 aa)) folds into the ATP-cone domain.

Belongs to the NrdR family. The cofactor is Zn(2+).

Negatively regulates transcription of bacterial ribonucleotide reductase nrd genes and operons by binding to NrdR-boxes. This is Transcriptional repressor NrdR from Pseudomonas entomophila (strain L48).